A 219-amino-acid chain; its full sequence is Casein kinase II subunit beta' (219 aa).

A Phosphothreonine; by autocatalysis modification is found at Thr2.

Belongs to the casein kinase 2 subunit beta family. As to quaternary structure, tetramer of two alpha and two beta' subunits. Post-translationally, phosphorylated by alpha subunit.

In terms of biological role, participates in Wnt signaling. Plays a complex role in regulating the basal catalytic activity of the alpha subunit. The protein is Casein kinase II subunit beta' (CkIIbeta2) of Drosophila melanogaster (Fruit fly).